A 369-amino-acid polypeptide reads, in one-letter code: GTPase Obg (369 aa).

The Obg domain maps to 1–159; the sequence is MKFVDEVTID…KNLKLELRVL (159 aa). The OBG-type G domain maps to 160-334; it reads ADVGLLGMPN…LIHAIYSHVA (175 aa). GTP-binding positions include 166-173, 191-195, 213-216, 284-287, and 315-317; these read GMPNAGKS, FTTLH, DIPG, NKLD, and SAL. Residues S173 and T193 each contribute to the Mg(2+) site. The segment at 339–369 is disordered; the sequence is QPEEVPDPRFTTNEDLSEAAPAPDRDDPRFR.

It belongs to the TRAFAC class OBG-HflX-like GTPase superfamily. OBG GTPase family. As to quaternary structure, monomer. The cofactor is Mg(2+).

The protein resides in the cytoplasm. In terms of biological role, an essential GTPase which binds GTP, GDP and possibly (p)ppGpp with moderate affinity, with high nucleotide exchange rates and a fairly low GTP hydrolysis rate. Plays a role in control of the cell cycle, stress response, ribosome biogenesis and in those bacteria that undergo differentiation, in morphogenesis control. The polypeptide is GTPase Obg (Leptothrix cholodnii (strain ATCC 51168 / LMG 8142 / SP-6) (Leptothrix discophora (strain SP-6))).